The following is a 382-amino-acid chain: MKKIPSFLQMYSALIASPTMSSIDPHFDQSNRTLIELLANWLSSLGFRTEVIPLEGSRDKFNLLATYGEGEGGLLLAGHTDTVPFDEGRWQFDPFKLTEKDGKFYGLGTADMKGFFAFVIDAVSQLDLTRLTKPLRILATADEETTMLGARTFIQHSHIRPDCAIIGEPTSLKPIRAHKGHVGEALRITGKSGHSSDPSKGINAIELMHEATGYLMQMRDELRQKYHHAAFNIPYPTMNFGAISGGDAVNRICACCELHFDIRPLPNLRLTDLNEMLQAKLAPMFEKWGGRISLQALHDPIPGYECAHSAQVVQVVEKLLGEQCETVNYCTEAPFIQQLCPTLVLGPGSIEQAHQPDEFLSAEFIDPTRELLSKLIGQFCTG.

His79 is a binding site for Zn(2+). Residue Asp81 is part of the active site. Residue Asp111 participates in Zn(2+) binding. The active site involves Glu143. Zn(2+) contacts are provided by Glu144, Glu168, and His354.

The protein belongs to the peptidase M20A family. ArgE subfamily. As to quaternary structure, homodimer. The cofactor is Zn(2+). It depends on Co(2+) as a cofactor. Requires glutathione as cofactor.

It localises to the cytoplasm. It catalyses the reaction N(2)-acetyl-L-ornithine + H2O = L-ornithine + acetate. It participates in amino-acid biosynthesis; L-arginine biosynthesis; L-ornithine from N(2)-acetyl-L-ornithine (linear): step 1/1. Its function is as follows. Catalyzes the hydrolysis of the amide bond of N(2)-acetylated L-amino acids. Cleaves the acetyl group from N-acetyl-L-ornithine to form L-ornithine, an intermediate in L-arginine biosynthesis pathway, and a branchpoint in the synthesis of polyamines. This Pasteurella multocida (strain Pm70) protein is Acetylornithine deacetylase.